The following is a 420-amino-acid chain: Glucose-1-phosphate adenylyltransferase (420 aa).

Alpha-D-glucose 1-phosphate is bound by residues tyrosine 107, glycine 173, 188-189 (EK), and serine 206.

The protein belongs to the bacterial/plant glucose-1-phosphate adenylyltransferase family. In terms of assembly, homotetramer.

The enzyme catalyses alpha-D-glucose 1-phosphate + ATP + H(+) = ADP-alpha-D-glucose + diphosphate. The protein operates within glycan biosynthesis; glycogen biosynthesis. In terms of biological role, involved in the biosynthesis of ADP-glucose, a building block required for the elongation reactions to produce glycogen. Catalyzes the reaction between ATP and alpha-D-glucose 1-phosphate (G1P) to produce pyrophosphate and ADP-Glc. This chain is Glucose-1-phosphate adenylyltransferase, found in Shewanella baltica (strain OS155 / ATCC BAA-1091).